A 129-amino-acid chain; its full sequence is uncharacterized protein (129 aa).

This is an uncharacterized protein from Haemophilus influenzae (strain ATCC 51907 / DSM 11121 / KW20 / Rd).